A 424-amino-acid polypeptide reads, in one-letter code: Glutamate-1-semialdehyde 2,1-aminomutase (424 aa).

Residue Lys263 is modified to N6-(pyridoxal phosphate)lysine.

This sequence belongs to the class-III pyridoxal-phosphate-dependent aminotransferase family. HemL subfamily. As to quaternary structure, homodimer. It depends on pyridoxal 5'-phosphate as a cofactor.

The protein resides in the cytoplasm. It catalyses the reaction (S)-4-amino-5-oxopentanoate = 5-aminolevulinate. It functions in the pathway porphyrin-containing compound metabolism; protoporphyrin-IX biosynthesis; 5-aminolevulinate from L-glutamyl-tRNA(Glu): step 2/2. The sequence is that of Glutamate-1-semialdehyde 2,1-aminomutase from Campylobacter jejuni subsp. jejuni serotype O:23/36 (strain 81-176).